Reading from the N-terminus, the 459-residue chain is Cysteine--tRNA ligase (459 aa).

Cys29 contributes to the Zn(2+) binding site. A 'HIGH' region motif is present at residues 31–41; sequence PTVYNLVHIGN. Zn(2+)-binding residues include Cys209, His234, and Glu238. Residues 267 to 271 carry the 'KMSKS' region motif; that stretch reads KMSKS. ATP is bound at residue Lys270.

It belongs to the class-I aminoacyl-tRNA synthetase family. As to quaternary structure, monomer. Requires Zn(2+) as cofactor.

The protein resides in the cytoplasm. It catalyses the reaction tRNA(Cys) + L-cysteine + ATP = L-cysteinyl-tRNA(Cys) + AMP + diphosphate. The polypeptide is Cysteine--tRNA ligase (Saccharophagus degradans (strain 2-40 / ATCC 43961 / DSM 17024)).